Here is a 142-residue protein sequence, read N- to C-terminus: MLSEKFHLRLLTLLTLLTALSLTDVASESKLEKLLMKRVDRDVKPAAAVAVSPSKAKEFLTSLKRPKRNLWDRSRPDVQQWIQQFMYMGFDEARLETDLAYWMDQHRSSDQGRQHHYDENAALGPRGAASYRHGANVNYDYY.

Positions 1-28 (MLSEKFHLRLLTLLTLLTALSLTDVASE) are cleaved as a signal peptide. 2 propeptides span residues 29 to 66 (SKLE…LKRP) and 127 to 142 (GAAS…YDYY).

This sequence belongs to the augurin family.

It localises to the secreted. Its subcellular location is the cytoplasm. It is found in the apical cell membrane. In terms of biological role, probable hormone. Required for the proper formation of the central nervous system by attenuating cell proliferation during development. This Danio rerio (Zebrafish) protein is Augurin-A.